Consider the following 300-residue polypeptide: LysM and putative peptidoglycan-binding domain-containing protein 3 (300 aa).

At 1 to 216 (MAGRNQNRTA…PYYGADWGMG (216 aa)) the chain is on the extracellular side. Residues N7 and N26 are each glycosylated (N-linked (GlcNAc...) asparagine). S55 is subject to Phosphoserine. The LysM domain occupies 65–109 (LTKDIQEGDTLNAVALQYCCTVADIKRVNNLISDQDFFALRSIKI). The interval 136–157 (PYFQEQDTVPANDSPSSSESAG) is disordered. Over residues 140-156 (EQDTVPANDSPSSSESA) the composition is skewed to polar residues. N199 carries an N-linked (GlcNAc...) asparagine glycan. Residues 217–237 (WWTAVVIMLIVGIITPVFYLL) traverse the membrane as a helical segment. Residues 238-300 (YYEILAKVDV…LYRQDPQARD (63 aa)) lie on the Cytoplasmic side of the membrane. A disordered region spans residues 253–300 (VDSSHLHPGLTPPSHHREMGNAIGPTKGIPVGQQDDHRLYRQDPQARD). The segment covering 286–300 (QDDHRLYRQDPQARD) has biased composition (basic and acidic residues).

The protein localises to the cell membrane. It localises to the golgi apparatus. Functionally, essential for Golgi structural integrity. The protein is LysM and putative peptidoglycan-binding domain-containing protein 3 (Lysmd3) of Rattus norvegicus (Rat).